Reading from the N-terminus, the 186-residue chain is Potassium-transporting ATPase KdpC subunit (186 aa).

The helical transmembrane segment at 10 to 30 (LTIITMVLCGFLFPLAITLIG) threads the bilayer.

Belongs to the KdpC family. The system is composed of three essential subunits: KdpA, KdpB and KdpC.

The protein resides in the cell membrane. In terms of biological role, part of the high-affinity ATP-driven potassium transport (or Kdp) system, which catalyzes the hydrolysis of ATP coupled with the electrogenic transport of potassium into the cytoplasm. This subunit acts as a catalytic chaperone that increases the ATP-binding affinity of the ATP-hydrolyzing subunit KdpB by the formation of a transient KdpB/KdpC/ATP ternary complex. This is Potassium-transporting ATPase KdpC subunit from Staphylococcus aureus (strain MSSA476).